A 217-amino-acid chain; its full sequence is Adenylate kinase (217 aa).

Position 10–15 (10–15 (GAGKGT)) interacts with ATP. The segment at 30–59 (STGDMFRAAMKEETPLGLEAKSYIDKGELV) is NMP. AMP-binding positions include threonine 31, arginine 36, 57 to 59 (ELV), 85 to 88 (GFPR), and glutamine 92. The segment at 126–163 (GRRICSVCGTTYHLVFNPPKTPGICDKDGGELYQRADD) is LID. Arginine 127 serves as a coordination point for ATP. Residues cysteine 130 and cysteine 133 each coordinate Zn(2+). 136–137 (TY) serves as a coordination point for ATP. Zn(2+)-binding residues include cysteine 150 and aspartate 153. The AMP site is built by arginine 160 and arginine 171. Glutamine 199 is a binding site for ATP.

This sequence belongs to the adenylate kinase family. In terms of assembly, monomer.

It localises to the cytoplasm. It catalyses the reaction AMP + ATP = 2 ADP. It functions in the pathway purine metabolism; AMP biosynthesis via salvage pathway; AMP from ADP: step 1/1. Catalyzes the reversible transfer of the terminal phosphate group between ATP and AMP. Plays an important role in cellular energy homeostasis and in adenine nucleotide metabolism. This Bacillus subtilis (strain 168) protein is Adenylate kinase.